A 456-amino-acid chain; its full sequence is RuvB-like helicase 1 (456 aa).

Residue 70-77 coordinates ATP; that stretch reads GPPGTGKT.

It belongs to the RuvB family. Forms homohexameric rings. May form a dodecamer with rept made of two stacked hexameric rings. Component of the chromatin remodeling Ino80 complex.

The protein localises to the nucleus. It catalyses the reaction ATP + H2O = ADP + phosphate + H(+). In terms of biological role, acts as a transcriptional coactivator in Wg signaling. Functionally, proposed core component of the chromatin remodeling Ino80 complex which is involved in transcriptional regulation, DNA replication and probably DNA repair. This chain is RuvB-like helicase 1, found in Aedes aegypti (Yellowfever mosquito).